Reading from the N-terminus, the 132-residue chain is Small ribosomal subunit protein uS8 (132 aa).

Belongs to the universal ribosomal protein uS8 family. In terms of assembly, part of the 30S ribosomal subunit. Contacts proteins S5 and S12.

One of the primary rRNA binding proteins, it binds directly to 16S rRNA central domain where it helps coordinate assembly of the platform of the 30S subunit. The protein is Small ribosomal subunit protein uS8 of Geobacillus sp. (strain WCH70).